Consider the following 122-residue polypeptide: Large ribosomal subunit protein uL14 (122 aa).

Belongs to the universal ribosomal protein uL14 family. Part of the 50S ribosomal subunit. Forms a cluster with proteins L3 and L19. In the 70S ribosome, L14 and L19 interact and together make contacts with the 16S rRNA in bridges B5 and B8.

Its function is as follows. Binds to 23S rRNA. Forms part of two intersubunit bridges in the 70S ribosome. This chain is Large ribosomal subunit protein uL14, found in Chloroflexus aurantiacus (strain ATCC 29366 / DSM 635 / J-10-fl).